The chain runs to 952 residues: Probable outer membrane protein pmp16 (952 aa).

A signal peptide spans 1 to 27 (MSKTPPKFLFYLGNFTACMFGMTPAVY). Residues 646-952 (GDLATTPLWQ…HLQAGSTLKF (307 aa)) enclose the Autotransporter domain.

This sequence belongs to the PMP outer membrane protein family.

It is found in the secreted. It localises to the cell wall. Its subcellular location is the cell outer membrane. The chain is Probable outer membrane protein pmp16 (pmp16) from Chlamydia pneumoniae (Chlamydophila pneumoniae).